Here is a 292-residue protein sequence, read N- to C-terminus: MFTGSIVALVTPMDENGNVCRTSLKKLIDYHVANGTSAIVSVGTTGESATLSHEEHGDVVMMTLELADGRIPVIAGTGANATAEAISLTKRFNDSGVVGCLTVTPYYNRPTQEGLFQHFKAIAEHTDLPQILYNVPSRTGCDMLPETVGRLAEIKNIVGIKEATGNLSRVHQIKELVSDDFILLSGDDATGMDFMQLGGVGVISVTANVAAREMADMCRLALAGQFAEARAINQRLMPLHTKLFVEPNPIPVKWGCKALGLVATDTLRLPMTPITDHGREAVTAALKHAGLL.

Pyruvate is bound at residue Thr45. The Proton donor/acceptor role is filled by Tyr133. Lys161 serves as the catalytic Schiff-base intermediate with substrate. Residue Ile203 participates in pyruvate binding.

This sequence belongs to the DapA family. In terms of assembly, homotetramer; dimer of dimers.

It is found in the cytoplasm. It catalyses the reaction L-aspartate 4-semialdehyde + pyruvate = (2S,4S)-4-hydroxy-2,3,4,5-tetrahydrodipicolinate + H2O + H(+). Its pathway is amino-acid biosynthesis; L-lysine biosynthesis via DAP pathway; (S)-tetrahydrodipicolinate from L-aspartate: step 3/4. In terms of biological role, catalyzes the condensation of (S)-aspartate-beta-semialdehyde [(S)-ASA] and pyruvate to 4-hydroxy-tetrahydrodipicolinate (HTPA). This chain is 4-hydroxy-tetrahydrodipicolinate synthase, found in Klebsiella pneumoniae subsp. pneumoniae (strain ATCC 700721 / MGH 78578).